Here is a 160-residue protein sequence, read N- to C-terminus: Dysbindin domain-containing protein 1 (160 aa).

Disordered regions lie at residues 1-34 and 95-160; these read MESPEGAGPGEITKEVKVPQAAPSVPAHETGDTC and ADSD…PKED. A phosphoserine mark is found at serine 3, serine 97, and serine 121. A compositionally biased stretch (basic and acidic residues) spans 127 to 143; it reads TRAEQNREKQTPSDPER.

This sequence belongs to the dysbindin family.

The protein is Dysbindin domain-containing protein 1 (Dbndd1) of Rattus norvegicus (Rat).